We begin with the raw amino-acid sequence, 316 residues long: LIM/homeobox protein lim-6 (316 aa).

LIM zinc-binding domains are found at residues 40-101 (KLCS…LYGK) and 102-163 (RCRR…ICNF). The homeobox DNA-binding region spans 186 to 245 (PKRPRTILNAQQRRQFKTAFERSSKPSRKVREQLANETGLSVRVVQVWFQNQRAKIKKLN). Residues 244 to 297 (LNKKDSDSGDTFKHGPGSEGRSTEDIRSSDDEEESVINLDADEVETSETSSYTD) form a disordered region. Basic and acidic residues predominate over residues 246–256 (KKDSDSGDTFK). Residues 273–289 (DDEEESVINLDADEVET) show a composition bias toward acidic residues.

Its subcellular location is the nucleus. Its function is as follows. Transcription factor. Required for the terminal differentiation of sensory- and motor-neurons, especially GABAergic neurons, and for morphological aspects of uterine development. Plays a role in the cell-type-specific regulation of glutamic acid decarboxylase unc-25. Involved in promoting sleep-like behavioral quiescence, acting by modulating expression of transcription factor aptf-1 in the single sleep-active ring interneuron RIS. Plays a role in regulation of RIS differentiation. Required for the functional asymmetry of the ASER and ASEL chemosensory neuron pair, conferring the ability to discriminate sodium from chloride, perhaps by modulating expression of receptor-type guanylate cyclases, such as gcy-5. Involved in regulating postembryonic axon maintenance in the ventral nerve cord, acting in concert with LIM homeobox protein ceh-14, via modulation of expression of immunoglobulin domain zig genes in the interneuron PVT. May play a role in the functions of the excretory gland cell. The sequence is that of LIM/homeobox protein lim-6 from Caenorhabditis elegans.